A 343-amino-acid chain; its full sequence is Small ribosomal subunit biogenesis GTPase RsgA (343 aa).

Residues 1 to 32 form a disordered region; that stretch reads MAKRRLSKRQVDRIRERQSQRLDTSVAAPDGK. Over residues 9–20 the composition is skewed to basic and acidic residues; the sequence is RQVDRIRERQSQ. The CP-type G domain maps to 109-273; that stretch reads YGKLKPVAAN…CIDSPGIREF (165 aa). Residues 156–159 and 215–223 contribute to the GTP site; these read NKLD and GQSGVGKSS. The Zn(2+) site is built by C297, C302, H304, and C310.

Belongs to the TRAFAC class YlqF/YawG GTPase family. RsgA subfamily. Monomer. Associates with 30S ribosomal subunit, binds 16S rRNA. Zn(2+) serves as cofactor.

It is found in the cytoplasm. In terms of biological role, one of several proteins that assist in the late maturation steps of the functional core of the 30S ribosomal subunit. Helps release RbfA from mature subunits. May play a role in the assembly of ribosomal proteins into the subunit. Circularly permuted GTPase that catalyzes slow GTP hydrolysis, GTPase activity is stimulated by the 30S ribosomal subunit. The protein is Small ribosomal subunit biogenesis GTPase RsgA of Saccharophagus degradans (strain 2-40 / ATCC 43961 / DSM 17024).